The sequence spans 226 residues: MERFLGFRTPLGALGVVILLTLILSSCSVKTSYKEKGRVYNGKCPEYAKVWVHYCPTKYAYTDRYQHLSKVKIVNPRNGKSVKISLRLNKKVRGICLPKRLKKYLGKPFLGKVYLLRCGENGVKKCPKYIRGYASWYGGKFHGRKTASGIRFNQHEYYAAHRYLPFGTLLEVKNLKNGRKVIVKVVDRGPYVRGRHLDLSYAAAKKLGMIRDGVIPFEAKVLRCGY.

The signal sequence occupies residues Met-1–Ser-26. Residue Cys-27 is the site of N-palmitoyl cysteine attachment. A lipid anchor (S-diacylglycerol cysteine) is attached at Cys-27.

It belongs to the RlpA family.

It localises to the cell membrane. In terms of biological role, lytic transglycosylase with a strong preference for naked glycan strands that lack stem peptides. The protein is Probable endolytic peptidoglycan transglycosylase RlpA of Aquifex aeolicus (strain VF5).